Here is a 492-residue protein sequence, read N- to C-terminus: Serine carboxypeptidase-like 31 (492 aa).

The signal sequence occupies residues 1–30; that stretch reads MDNYQTKNISNLLTSLCFTTLLILAPVVIC. 3 disulfide bridges follow: Cys105–Cys376, Cys270–Cys283, and Cys307–Cys344. An N-linked (GlcNAc...) asparagine glycan is attached at Asn156. Ser198 is a catalytic residue. N-linked (GlcNAc...) asparagine glycosylation is found at Asn221 and Asn271. 2 N-linked (GlcNAc...) asparagine glycosylation sites follow: Asn372 and Asn383. Active-site residues include Asp413 and His465.

Belongs to the peptidase S10 family. Expressed in roots, senescent leaves, stems, flowers and siliques.

It localises to the secreted. Its function is as follows. Probable carboxypeptidase. This is Serine carboxypeptidase-like 31 (SCPL31) from Arabidopsis thaliana (Mouse-ear cress).